Here is a 336-residue protein sequence, read N- to C-terminus: Holliday junction branch migration complex subunit RuvB (336 aa).

The tract at residues 1 to 182 (MKERIVNLET…FGMSFRMQFY (182 aa)) is large ATPase domain (RuvB-L). ATP-binding positions include leucine 21, arginine 22, glycine 63, lysine 66, threonine 67, serine 68, 129 to 131 (EDF), arginine 172, tyrosine 182, and arginine 219. Threonine 67 is a Mg(2+) binding site. A small ATPAse domain (RuvB-S) region spans residues 183–253 (NPSELALIIK…ITLHALNELG (71 aa)). Residues 256 to 336 (ELGFDEADLA…IPTLNPQTLF (81 aa)) form a head domain (RuvB-H) region. DNA-binding residues include arginine 310 and arginine 315.

This sequence belongs to the RuvB family. Homohexamer. Forms an RuvA(8)-RuvB(12)-Holliday junction (HJ) complex. HJ DNA is sandwiched between 2 RuvA tetramers; dsDNA enters through RuvA and exits via RuvB. An RuvB hexamer assembles on each DNA strand where it exits the tetramer. Each RuvB hexamer is contacted by two RuvA subunits (via domain III) on 2 adjacent RuvB subunits; this complex drives branch migration. In the full resolvosome a probable DNA-RuvA(4)-RuvB(12)-RuvC(2) complex forms which resolves the HJ.

Its subcellular location is the cytoplasm. It carries out the reaction ATP + H2O = ADP + phosphate + H(+). Its function is as follows. The RuvA-RuvB-RuvC complex processes Holliday junction (HJ) DNA during genetic recombination and DNA repair, while the RuvA-RuvB complex plays an important role in the rescue of blocked DNA replication forks via replication fork reversal (RFR). RuvA specifically binds to HJ cruciform DNA, conferring on it an open structure. The RuvB hexamer acts as an ATP-dependent pump, pulling dsDNA into and through the RuvAB complex. RuvB forms 2 homohexamers on either side of HJ DNA bound by 1 or 2 RuvA tetramers; 4 subunits per hexamer contact DNA at a time. Coordinated motions by a converter formed by DNA-disengaged RuvB subunits stimulates ATP hydrolysis and nucleotide exchange. Immobilization of the converter enables RuvB to convert the ATP-contained energy into a lever motion, pulling 2 nucleotides of DNA out of the RuvA tetramer per ATP hydrolyzed, thus driving DNA branch migration. The RuvB motors rotate together with the DNA substrate, which together with the progressing nucleotide cycle form the mechanistic basis for DNA recombination by continuous HJ branch migration. Branch migration allows RuvC to scan DNA until it finds its consensus sequence, where it cleaves and resolves cruciform DNA. The polypeptide is Holliday junction branch migration complex subunit RuvB (Helicobacter pylori (strain ATCC 700392 / 26695) (Campylobacter pylori)).